A 184-amino-acid polypeptide reads, in one-letter code: Holliday junction branch migration complex subunit RuvA (184 aa).

Residues 1-64 are domain I; the sequence is MIKAIEGIIT…EDANLLYGFI (64 aa). Residues 65–137 are domain II; that stretch reads KESEQRIFEM…LSDAKFGEIN (73 aa). Position 137 (Asn137) is a region of interest, flexible linker. A domain III region spans residues 138-184; the sequence is SMPSYQNEAFMALESLGFKRDRISKVLNECSSNDTASLIKEALKKLA.

The protein belongs to the RuvA family. Homotetramer. Forms an RuvA(8)-RuvB(12)-Holliday junction (HJ) complex. HJ DNA is sandwiched between 2 RuvA tetramers; dsDNA enters through RuvA and exits via RuvB. An RuvB hexamer assembles on each DNA strand where it exits the tetramer. Each RuvB hexamer is contacted by two RuvA subunits (via domain III) on 2 adjacent RuvB subunits; this complex drives branch migration. In the full resolvosome a probable DNA-RuvA(4)-RuvB(12)-RuvC(2) complex forms which resolves the HJ.

It localises to the cytoplasm. Its function is as follows. The RuvA-RuvB-RuvC complex processes Holliday junction (HJ) DNA during genetic recombination and DNA repair, while the RuvA-RuvB complex plays an important role in the rescue of blocked DNA replication forks via replication fork reversal (RFR). RuvA specifically binds to HJ cruciform DNA, conferring on it an open structure. The RuvB hexamer acts as an ATP-dependent pump, pulling dsDNA into and through the RuvAB complex. HJ branch migration allows RuvC to scan DNA until it finds its consensus sequence, where it cleaves and resolves the cruciform DNA. This is Holliday junction branch migration complex subunit RuvA from Campylobacter fetus subsp. fetus (strain 82-40).